The primary structure comprises 184 residues: Mediator of RNA polymerase II transcription subunit 28 (184 aa).

A coiled-coil region spans residues Leu-77–Ser-105.

Belongs to the Mediator complex subunit 28 family. As to quaternary structure, component of the Mediator complex.

The protein resides in the nucleus. Component of the Mediator complex, a coactivator involved in the regulated transcription of nearly all RNA polymerase II-dependent genes. Mediator functions as a bridge to convey information from gene-specific regulatory proteins to the basal RNA polymerase II transcription machinery. Mediator is recruited to promoters by direct interactions with regulatory proteins and serves as a scaffold for the assembly of a functional preinitiation complex with RNA polymerase II and the general transcription factors. The chain is Mediator of RNA polymerase II transcription subunit 28 (MED28) from Aedes aegypti (Yellowfever mosquito).